The primary structure comprises 1328 residues: DNA-directed RNA polymerase subunit beta (1328 aa).

The protein belongs to the RNA polymerase beta chain family. As to quaternary structure, the RNAP catalytic core consists of 2 alpha, 1 beta, 1 beta' and 1 omega subunit. When a sigma factor is associated with the core the holoenzyme is formed, which can initiate transcription.

It carries out the reaction RNA(n) + a ribonucleoside 5'-triphosphate = RNA(n+1) + diphosphate. In terms of biological role, DNA-dependent RNA polymerase catalyzes the transcription of DNA into RNA using the four ribonucleoside triphosphates as substrates. The chain is DNA-directed RNA polymerase subunit beta from Karelsulcia muelleri (strain GWSS) (Sulcia muelleri).